The sequence spans 156 residues: Arginine repressor (156 aa).

Belongs to the ArgR family.

Its subcellular location is the cytoplasm. The protein operates within amino-acid biosynthesis; L-arginine biosynthesis [regulation]. Regulates arginine biosynthesis genes. In Edwardsiella ictaluri (strain 93-146), this protein is Arginine repressor.